The primary structure comprises 1014 residues: Disease resistance protein RGA4 (1014 aa).

A structured coiled coil (CC) domain region spans residues 1–182 (MEAALLSGFI…PRIHEADLVG (182 aa)). Residues 105 to 145 (RTVRATKKLLQTNQHLAQELQRLKRMVEEANQRKQRYTAAA) adopt a coiled-coil conformation. In terms of domain architecture, NB-ARC spans 189 to 466 (ELLEQLAERQ…WLAEGFVEPV (278 aa)). LRR repeat units lie at residues 484 to 506 (RNIIEPINVSNNDKVKTCQTYGM), 507 to 530 (MREFISHMSISQNFVTFFCDDKFL), 531 to 552 (PKYVRRLSLHGDTVVNGDNFNG), 580 to 602 (LRVLDLEKCDDLNDDHLKEICNL), 603 to 624 (VLLKYLSLGGNISKLPKDIAKL), 625 to 647 (KDLEALDVRRSKVKIMPVEVFGL), 701 to 725 (MNKLRKLKIWCTSSAGSTDWTDLRE), 762 to 784 (PCYLSSLKLHGNFPQLPQFVTSL), 785 to 807 (RGLKELCLSSTKFTTGLLEALSN), 808 to 833 (LSYLQYLKLVADELEKFIIKVQGFPR), and 854 to 877 (LPFLVTLQLLCKDLHGLSDIKIEC).

Belongs to the disease resistance NB-LRR family. In terms of tissue distribution, expressed in leaves.

Probable disease resistance protein. Resistance proteins guard the plant against pathogens that contain an appropriate avirulence protein via an indirect interaction with this avirulence protein. That triggers a defense system including the hypersensitive response, which restricts the pathogen growth. At the opposite of cultivars Aichi asahi and Sasanishiki, the cultivars Nipponbare, Mokoto and Hitomebore don't recognize the effector avirulence protein AVR-Pia from M.oryzae. This is Disease resistance protein RGA4 from Oryza sativa subsp. japonica (Rice).